Reading from the N-terminus, the 229-residue chain is MSQPRPLLSPPETEEQLLAQAQQLSGYTLGELAALAGLVTPENLKRDKGWIGVLLEIWLGASAGSKPEQDFAALGVELKTIPVDSLGRPLETTFVCVAPLTGNSGVTWETSHVRHKLKRVLWIPVEGERSIPLAQRRVGSPLLWTPNEEEDRQLREDWEELMDMIVLGQVERITARHGEYLQIRPKAANAKALTEAIGARGERILTLPRGFYLKKNFTSALLARHFLIQ.

It belongs to the MutH family.

The protein localises to the cytoplasm. In terms of biological role, sequence-specific endonuclease that cleaves unmethylated GATC sequences. It is involved in DNA mismatch repair. In Shigella boydii serotype 18 (strain CDC 3083-94 / BS512), this protein is DNA mismatch repair protein MutH.